The primary structure comprises 79 residues: MSGLGTMVLTLLLLVFMVTSHQDGGKKQATQRNAVNIRRRKSITQRTTDEKCNEYCEERDRNCCGKANGEPRCARMCFG.

A signal peptide spans 1 to 20 (MSGLGTMVLTLLLLVFMVTS). The propeptide occupies 21–46 (HQDGGKKQATQRNAVNIRRRKSITQR). Intrachain disulfides connect C52–C64, C56–C73, and C63–C77. F78 is modified (phenylalanine amide).

Belongs to the conotoxin O3 superfamily. In terms of tissue distribution, expressed by the venom duct.

It is found in the secreted. This chain is Conotoxin LiCr173, found in Conus lividus (Livid cone).